A 124-amino-acid chain; its full sequence is Ribonuclease pancreatic (124 aa).

Positions Lys-1–Met-13 are enriched in basic and acidic residues. The segment at Lys-1–Asn-21 is disordered. Residues Lys-7 and Arg-10 each contribute to the substrate site. The active-site Proton acceptor is the His-12. 4 disulfides stabilise this stretch: Cys-26-Cys-84, Cys-40-Cys-95, Cys-58-Cys-110, and Cys-65-Cys-72. Asn-34 carries N-linked (GlcNAc...) asparagine glycosylation. Residues Lys-41–Thr-45, Lys-66, and Arg-85 each bind substrate. His-119 acts as the Proton donor in catalysis.

This sequence belongs to the pancreatic ribonuclease family. As to quaternary structure, monomer. Interacts with and forms tight 1:1 complexes with RNH1. Dimerization of two such complexes may occur. Interaction with RNH1 inhibits this protein. As to expression, pancreas.

The protein resides in the secreted. It catalyses the reaction an [RNA] containing cytidine + H2O = an [RNA]-3'-cytidine-3'-phosphate + a 5'-hydroxy-ribonucleotide-3'-[RNA].. The catalysed reaction is an [RNA] containing uridine + H2O = an [RNA]-3'-uridine-3'-phosphate + a 5'-hydroxy-ribonucleotide-3'-[RNA].. Endonuclease that catalyzes the cleavage of RNA on the 3' side of pyrimidine nucleotides. Acts on single-stranded and double-stranded RNA. The protein is Ribonuclease pancreatic (RNASE1) of Hippopotamus amphibius (Hippopotamus).